Reading from the N-terminus, the 144-residue chain is Large ribosomal subunit protein uL15 (144 aa).

The interval 1–44 (MNLNELQPAAGSRHVRNRVGRGTSSGNGKTSGRGQKGQKARGKV) is disordered. Residues 23-35 (TSSGNGKTSGRGQ) show a composition bias toward gly residues.

The protein belongs to the universal ribosomal protein uL15 family. As to quaternary structure, part of the 50S ribosomal subunit.

Binds to the 23S rRNA. In Leuconostoc mesenteroides subsp. mesenteroides (strain ATCC 8293 / DSM 20343 / BCRC 11652 / CCM 1803 / JCM 6124 / NCDO 523 / NBRC 100496 / NCIMB 8023 / NCTC 12954 / NRRL B-1118 / 37Y), this protein is Large ribosomal subunit protein uL15.